Here is a 325-residue protein sequence, read N- to C-terminus: N-acetyl-gamma-glutamyl-phosphate reductase (325 aa).

The active site involves cysteine 135.

It belongs to the NAGSA dehydrogenase family. Type 1 subfamily.

It localises to the cytoplasm. The enzyme catalyses N-acetyl-L-glutamate 5-semialdehyde + phosphate + NADP(+) = N-acetyl-L-glutamyl 5-phosphate + NADPH + H(+). It participates in amino-acid biosynthesis; L-arginine biosynthesis; N(2)-acetyl-L-ornithine from L-glutamate: step 3/4. Catalyzes the NADPH-dependent reduction of N-acetyl-5-glutamyl phosphate to yield N-acetyl-L-glutamate 5-semialdehyde. The polypeptide is N-acetyl-gamma-glutamyl-phosphate reductase (Flavobacterium johnsoniae (strain ATCC 17061 / DSM 2064 / JCM 8514 / BCRC 14874 / CCUG 350202 / NBRC 14942 / NCIMB 11054 / UW101) (Cytophaga johnsonae)).